The sequence spans 117 residues: Large ribosomal subunit protein bL20c (117 aa).

Belongs to the bacterial ribosomal protein bL20 family.

The protein resides in the plastid. It localises to the chloroplast. Binds directly to 23S ribosomal RNA and is necessary for the in vitro assembly process of the 50S ribosomal subunit. It is not involved in the protein synthesizing functions of that subunit. The protein is Large ribosomal subunit protein bL20c of Vitis vinifera (Grape).